We begin with the raw amino-acid sequence, 491 residues long: HEPACAM family member 2 (491 aa).

The N-terminal stretch at 1-18 (MWLRVFTAFLSFTAGACS) is a signal peptide. 3 N-linked (GlcNAc...) asparagine glycosylation sites follow: asparagine 73, asparagine 117, and asparagine 153. Ig-like C2-type domains are found at residues 137-221 (PVVQ…SDII) and 223-319 (PTIY…THFT). Cystine bridges form between cysteine 158/cysteine 207 and cysteine 258/cysteine 303. N-linked (GlcNAc...) asparagine glycosylation occurs at asparagine 308. A helical membrane pass occupies residues 340–360 (LASITGISLFLIISMCLLFLW). At 361–491 (KKFQPYKVIK…GKHSRAKQCI (131 aa)) the chain is on the cytoplasmic side. Residues 444–454 (QQQDHPESSSQ) are compositionally biased toward polar residues. Disordered stretches follow at residues 444–466 (QQQD…DRHD) and 472–491 (ELGH…KQCI). Positions 472-482 (ELGHCKEQDKG) are enriched in basic and acidic residues.

Post-translationally, poly-ADP-ribosylated (PARsylated) by tankyrase TNKS during late G2 and prophase, leading to translocation to mitotic centrosomes. N-glycosylated.

It localises to the golgi apparatus membrane. It is found in the cytoplasm. The protein localises to the cytoskeleton. The protein resides in the spindle. Its subcellular location is the microtubule organizing center. It localises to the centrosome. It is found in the midbody. Functionally, required during prometaphase for centrosome maturation. Following poly-ADP-ribosylation (PARsylation) by TNKS, translocates from the Golgi apparatus to mitotic centrosomes and plays a key role in the formation of robust microtubules for prompt movement of chromosomes: anchors AKAP9/CG-NAP, a scaffold protein of the gamma-tubulin ring complex and promotes centrosome maturation. The polypeptide is HEPACAM family member 2 (HEPACAM2) (Bos taurus (Bovine)).